Consider the following 511-residue polypeptide: Cytochrome P450 monooxygenase cypX (511 aa).

A helical transmembrane segment spans residues 18–38 (LPFSLALVAAAFVLYNIVSII). N-linked (GlcNAc...) asparagine glycans are attached at residues N162 and N407. Heme is bound at residue C454.

The protein belongs to the cytochrome P450 family. Requires heme as cofactor.

The protein resides in the membrane. It participates in mycotoxin biosynthesis. Functionally, cytochrome P450 monooxygenase; part of the fragmented gene cluster that mediates the biosynthesis of dothistromin (DOTH), a polyketide toxin very similar in structure to the aflatoxin precursor, versicolorin B. The first step of the pathway is the conversion of acetate to norsolorinic acid (NOR) and requires the fatty acid synthase subunits hexA and hexB, as well as the polyketide synthase pksA. PksA combines a hexanoyl starter unit and 7 malonyl-CoA extender units to synthesize the precursor NOR. The hexanoyl starter unit is provided to the acyl-carrier protein (ACP) domain by the fungal fatty acid synthase hexA/hexB. The second step is the conversion of NOR to averantin (AVN) and requires the norsolorinic acid ketoreductase nor1, which catalyzes the dehydration of norsolorinic acid to form (1'S)-averantin. The cytochrome P450 monooxygenase avnA then catalyzes the hydroxylation of AVN to 5'hydroxyaverantin (HAVN). The next step is performed by adhA that transforms HAVN to averufin (AVF). Averufin might then be converted to hydroxyversicolorone by cypX and avfA. Hydroxyversicolorone is further converted versiconal hemiacetal acetate (VHA) by moxY. VHA is then the substrate for the versiconal hemiacetal acetate esterase est1 to yield versiconal (VAL). Versicolorin B synthase vbsA then converts VAL to versicolorin B (VERB) by closing the bisfuran ring. Then, the activity of the versicolorin B desaturase verB leads to versicolorin A (VERA). DotB, a predicted chloroperoxidase, may perform epoxidation of the A-ring of VERA. Alternatively, a cytochrome P450, such as cypX or avnA could catalyze this step. It is also possible that another, uncharacterized, cytochrome P450 enzyme is responsible for this step. Opening of the epoxide could potentially be achieved by the epoxide hydrolase epoA. However, epoA seems not to be required for DOTH biosynthesis, but other epoxide hydrolases may have the ability to complement this hydrolysis. Alternatively, opening of the epoxide ring could be achieved non-enzymatically. The next step is the deoxygenation of ring A to yield the 5,8-dihydroxyanthraquinone which is most likely catalyzed by the NADPH dehydrogenase encoded by ver1. The last stages of DOTH biosynthesis are proposed to involve hydroxylation of the bisfuran. OrdB and norB might have oxidative roles here. An alternative possibility is that cytochrome P450 monoogenases such as avnA and cypX might perform these steps in addition to previously proposed steps. The sequence is that of Cytochrome P450 monooxygenase cypX from Dothistroma septosporum (Red band needle blight fungus).